Here is a 509-residue protein sequence, read N- to C-terminus: Ribonuclease Y (509 aa).

A helical transmembrane segment spans residues 3–23 (WILYVILPAVCIILGWTIRWL). A KH domain is found at 199–284 (TVSTVSLPSD…EIVQKVTREI (86 aa)). In terms of domain architecture, HD spans 325–418 (VLQHSKEVAI…VQIADAISAA (94 aa)).

It belongs to the RNase Y family.

It is found in the cell membrane. Functionally, endoribonuclease that initiates mRNA decay. The protein is Ribonuclease Y of Treponema denticola (strain ATCC 35405 / DSM 14222 / CIP 103919 / JCM 8153 / KCTC 15104).